We begin with the raw amino-acid sequence, 952 residues long: Valine--tRNA ligase (952 aa).

The 'HIGH' region signature appears at 42 to 52; it reads PNVTGSLHMGH. The 'KMSKS' region signature appears at 554–558; sequence KMSKS. Lys-557 is an ATP binding site. Positions 888–952 form a coiled coil; the sequence is AELARLDGEI…EEQKKTIAAL (65 aa).

The protein belongs to the class-I aminoacyl-tRNA synthetase family. ValS type 1 subfamily. Monomer.

It localises to the cytoplasm. The enzyme catalyses tRNA(Val) + L-valine + ATP = L-valyl-tRNA(Val) + AMP + diphosphate. Its function is as follows. Catalyzes the attachment of valine to tRNA(Val). As ValRS can inadvertently accommodate and process structurally similar amino acids such as threonine, to avoid such errors, it has a 'posttransfer' editing activity that hydrolyzes mischarged Thr-tRNA(Val) in a tRNA-dependent manner. In Vibrio parahaemolyticus serotype O3:K6 (strain RIMD 2210633), this protein is Valine--tRNA ligase.